We begin with the raw amino-acid sequence, 208 residues long: MIVIKDAHFLTSSNNLSQCPASLTSEMVILGRSNVGKSTFINTLLGKNLAKSSATPGKTRLANFFSTTWEDKENALTTTFNVIDLPGFGYAKVSKSLKKEWEGFLWELLSVRVSIKLFIHLIDARHLDLEIDKNAKENIQALLRPDQAYLSLFTKFDKLNKNEQHRLFLNAPKPFLINTIHFNALSSKYPTLEIVRQTLLKYLLTNPL.

The 183-residue stretch at 23-205 (LTSEMVILGR…RQTLLKYLLT (183 aa)) folds into the EngB-type G domain. GTP-binding positions include 31-38 (GRSNVGKS), 57-61 (GKTRL), 84-87 (DLPG), 154-157 (TKFD), and 182-184 (FNA). 2 residues coordinate Mg(2+): Ser38 and Thr59.

This sequence belongs to the TRAFAC class TrmE-Era-EngA-EngB-Septin-like GTPase superfamily. EngB GTPase family. The cofactor is Mg(2+).

Functionally, necessary for normal cell division and for the maintenance of normal septation. The chain is Probable GTP-binding protein EngB from Helicobacter pylori (strain J99 / ATCC 700824) (Campylobacter pylori J99).